We begin with the raw amino-acid sequence, 245 residues long: Heavy metal-associated isoprenylated plant protein 1 (245 aa).

Residues 28–92 (PVHVVLKIDF…KLQKKSKKKV (65 aa)) form the HMA 1 domain. A metal cation-binding residues include C39 and C42. The tract at residues 91-113 (KVELISPKPKKDTKENNEKKAND) is disordered. Over residues 99-113 (PKKDTKENNEKKAND) the composition is skewed to basic and acidic residues. Residues 121-188 (VTTVVLKVNC…KLKKTVQVVP (68 aa)) form the HMA 2 domain. 2 residues coordinate a metal cation: C132 and C135. C242 bears the Cysteine methyl ester mark. C242 carries S-farnesyl cysteine lipidation. A propeptide spans 243–245 (SVM) (removed in mature form).

This sequence belongs to the HIPP family.

In terms of biological role, heavy-metal-binding protein. The chain is Heavy metal-associated isoprenylated plant protein 1 from Arabidopsis thaliana (Mouse-ear cress).